The following is a 96-amino-acid chain: MDNGIKYAVFTEKSLRLLGKNQYTFNVESGFTKTEIKHWVELFFGVKVVAVNSHRLPGKGRRMGPILGHTMHYRRMIITLQLGILFHFYPLNSRVF.

The protein belongs to the universal ribosomal protein uL23 family. In terms of assembly, part of the 50S ribosomal subunit.

It localises to the plastid. Its subcellular location is the chloroplast. In terms of biological role, binds to 23S rRNA. This Sorghum bicolor (Sorghum) protein is Large ribosomal subunit protein uL23cz (rpl23-A).